Reading from the N-terminus, the 86-residue chain is Cytochrome c oxidase subunit 6B1 (86 aa).

Alanine 2 is subject to N-acetylalanine. Residues 27–73 (TRNCWQNYLDFHRCEKAMTAKGGDVSVCEWYRRVYKSLCPISWVSTW) enclose the CHCH domain. Residues 30-40 (CWQNYLDFHRC) carry the Cx9C motif motif. Cystine bridges form between cysteine 30-cysteine 65 and cysteine 40-cysteine 54. The short motif at 54-65 (CEWYRRVYKSLC) is the Cx10C motif element. Lysine 62 carries the N6-acetyllysine modification.

The protein belongs to the cytochrome c oxidase subunit 6B family. Component of the cytochrome c oxidase (complex IV, CIV), a multisubunit enzyme composed of 14 subunits. The complex is composed of a catalytic core of 3 subunits MT-CO1, MT-CO2 and MT-CO3, encoded in the mitochondrial DNA, and 11 supernumerary subunits COX4I1 (or COX4I2), COX5A, COX5B, COX6A2 (or COX6A1), COX6B1 (or COX6B2), COX6C, COX7A1 (or COX7A2), COX7B, COX7C, COX8B and NDUFA4, which are encoded in the nuclear genome. The complex exists as a monomer or a dimer and forms supercomplexes (SCs) in the inner mitochondrial membrane with NADH-ubiquinone oxidoreductase (complex I, CI) and ubiquinol-cytochrome c oxidoreductase (cytochrome b-c1 complex, complex III, CIII), resulting in different assemblies (supercomplex SCI(1)III(2)IV(1) and megacomplex MCI(2)III(2)IV(2)).

It localises to the mitochondrion inner membrane. Its pathway is energy metabolism; oxidative phosphorylation. Its function is as follows. Component of the cytochrome c oxidase, the last enzyme in the mitochondrial electron transport chain which drives oxidative phosphorylation. The respiratory chain contains 3 multisubunit complexes succinate dehydrogenase (complex II, CII), ubiquinol-cytochrome c oxidoreductase (cytochrome b-c1 complex, complex III, CIII) and cytochrome c oxidase (complex IV, CIV), that cooperate to transfer electrons derived from NADH and succinate to molecular oxygen, creating an electrochemical gradient over the inner membrane that drives transmembrane transport and the ATP synthase. Cytochrome c oxidase is the component of the respiratory chain that catalyzes the reduction of oxygen to water. Electrons originating from reduced cytochrome c in the intermembrane space (IMS) are transferred via the dinuclear copper A center (CU(A)) of subunit 2 and heme A of subunit 1 to the active site in subunit 1, a binuclear center (BNC) formed by heme A3 and copper B (CU(B)). The BNC reduces molecular oxygen to 2 water molecules using 4 electrons from cytochrome c in the IMS and 4 protons from the mitochondrial matrix. This is Cytochrome c oxidase subunit 6B1 (COX6B1) from Bos taurus (Bovine).